A 577-amino-acid chain; its full sequence is Outer spore wall assembly protein SHE10 (577 aa).

The N-terminal stretch at 1–23 is a signal peptide; that stretch reads MGKLIKLITTLTVLVSLLQYCCE. Coiled-coil stretches lie at residues 379-416 and 513-561; these read NETRSTLDELTNAMEKDLSEITDEIEKKVNAIREENVE and ILRS…EEDV. A compositionally biased stretch (basic and acidic residues) spans 525–545; that stretch reads RERKERERKEREKAAAEEFQR. Residues 525–577 are disordered; that stretch reads RERKERERKEREKAAAEEFQRQQELLLQQEEEDEEDVSYTSTSTITTTTTMTL. Low complexity predominate over residues 562–577; sequence SYTSTSTITTTTTMTL.

The protein belongs to the SHE10 family. In terms of assembly, component of the mitochondria-localized RNase mitochondrial RNA-processing (RNase MRP) composed of one single RNA encoded by the NME1 gene and at least 31 proteins. Absent in the nucleus-localized RNase MRP (NuMRP).

The protein localises to the mitochondrion. Its function is as follows. Involved in spore wall assembly. May be a component of the mitochondrial RNase MRP (MtMRP), a ribonucleoprotein endoribonuclease involved in the cleaving RNA transcripts to generate primers for DNA replication in mitochondria. In Saccharomyces cerevisiae (strain RM11-1a) (Baker's yeast), this protein is Outer spore wall assembly protein SHE10.